The following is a 67-amino-acid chain: Protein LITTLE ZIPPER 3 (67 aa).

Residues 14–59 adopt a coiled-coil conformation; sequence YIMKENERLRKKAELLNQENQQLLFQLKQKLSKTKNSNNGSNNDNK. The tract at residues 42 to 67 is disordered; it reads QKLSKTKNSNNGSNNDNKSSSASGQS.

Interacts with REV. Interacts with ATBH-8, ATBH-9, ATB-14 and ATB-15. As to expression, expressed in the adaxial epidermis of the cotyledons and leaves, and in the vascular cylinder of wild-type torpedo stage embryos. Confined in the central zone and the organizing center in the shoot apical meristem.

Its subcellular location is the nucleus. In terms of biological role, competitive inhibitor of the HD-ZIPIII transcription factors in shoot apical meristem (SAM) development. Acts by forming non-functional heterodimers. Part of a negative feedback loop. Involved in SAM development and lateral organ patterning. Essential for proper functioning of stem cells in the SAM. This chain is Protein LITTLE ZIPPER 3, found in Arabidopsis thaliana (Mouse-ear cress).